A 240-amino-acid chain; its full sequence is Purine nucleoside phosphorylase DeoD-type (240 aa).

Histidine 5 contacts a purine D-ribonucleoside. Phosphate is bound by residues glycine 21, arginine 25, arginine 44, and 88-91 (RVGS). Residues 181 to 183 (EME) and 205 to 206 (SD) contribute to the a purine D-ribonucleoside site. Aspartate 206 acts as the Proton donor in catalysis.

The protein belongs to the PNP/UDP phosphorylase family. As to quaternary structure, homohexamer; trimer of homodimers.

The enzyme catalyses a purine D-ribonucleoside + phosphate = a purine nucleobase + alpha-D-ribose 1-phosphate. The catalysed reaction is a purine 2'-deoxy-D-ribonucleoside + phosphate = a purine nucleobase + 2-deoxy-alpha-D-ribose 1-phosphate. Functionally, catalyzes the reversible phosphorolytic breakdown of the N-glycosidic bond in the beta-(deoxy)ribonucleoside molecules, with the formation of the corresponding free purine bases and pentose-1-phosphate. The polypeptide is Purine nucleoside phosphorylase DeoD-type (Enterobacter sp. (strain 638)).